Reading from the N-terminus, the 284-residue chain is uncharacterized protein (284 aa).

The first 23 residues, 1–23, serve as a signal peptide directing secretion; sequence MKRGCAIAVMICGLITSVSAASA.

This sequence belongs to the surface antigen msp4 family.

This is an uncharacterized protein from Brucella melitensis biotype 1 (strain ATCC 23456 / CCUG 17765 / NCTC 10094 / 16M).